Here is a 207-residue protein sequence, read N- to C-terminus: Uracil phosphoribosyltransferase (207 aa).

Residues Arg-77, Arg-102, and 129–137 (DPMLATGVS) contribute to the 5-phospho-alpha-D-ribose 1-diphosphate site. Uracil is bound by residues Ile-192 and 197-199 (GDA). Asp-198 is a 5-phospho-alpha-D-ribose 1-diphosphate binding site.

The protein belongs to the UPRTase family. Mg(2+) serves as cofactor.

It carries out the reaction UMP + diphosphate = 5-phospho-alpha-D-ribose 1-diphosphate + uracil. Its pathway is pyrimidine metabolism; UMP biosynthesis via salvage pathway; UMP from uracil: step 1/1. Its activity is regulated as follows. Allosterically activated by GTP. Its function is as follows. Catalyzes the conversion of uracil and 5-phospho-alpha-D-ribose 1-diphosphate (PRPP) to UMP and diphosphate. The sequence is that of Uracil phosphoribosyltransferase from Fervidobacterium nodosum (strain ATCC 35602 / DSM 5306 / Rt17-B1).